The chain runs to 715 residues: Polyribonucleotide nucleotidyltransferase (715 aa).

Mg(2+) contacts are provided by Asp-493 and Asp-499. The region spanning 560–619 is the KH domain; sequence PRMITVKINPEKIRDVIGKGGSVIRALTEETGTTIDISDDGVVTIASTSSEGMAEAKKRI. An S1 motif domain is found at 629 to 697; sequence GQVYEGTVLK…EKGRVRLSAK (69 aa).

The protein belongs to the polyribonucleotide nucleotidyltransferase family. Mg(2+) serves as cofactor.

The protein resides in the cytoplasm. It catalyses the reaction RNA(n+1) + phosphate = RNA(n) + a ribonucleoside 5'-diphosphate. Its function is as follows. Involved in mRNA degradation. Catalyzes the phosphorolysis of single-stranded polyribonucleotides processively in the 3'- to 5'-direction. The chain is Polyribonucleotide nucleotidyltransferase from Burkholderia orbicola (strain MC0-3).